The chain runs to 299 residues: CRISPR system Cms protein Csm4 (299 aa).

This sequence belongs to the CRISPR-associated Csm4 family. As to quaternary structure, part of the Csm effector complex that includes at least Cas10(1), Csm2(3), Csm3(5), Csm4(1), Csm5(1) and mature crRNA. The Csm complex is elongated and slightly twisted with a maximal length of 215 Angstroms and a diameter of 75-80 Angstroms. It has been modeled to have a central protein filamant of Csm3 subunits along which the dsRNA helix of paired crRNA and target RNA binds. The filament is capped at one end by Cas10 and Csm4 and at the other end by Csm5; ssDNA is thought to bind to the N-terminal HD domain of Cas10. Csm with a precursor crRNA does not include Csm5, while Cas6, the enzyme probably involved in pre-crRNA processing, is found associated with a subset of the Csm complex.

Functionally, CRISPR (clustered regularly interspaced short palindromic repeat) is an adaptive immune system that provides protection against mobile genetic elements (viruses, transposable elements and conjugative plasmids). CRISPR clusters contain spacers, sequences complementary to antecedent mobile elements, and target invading nucleic acids. CRISPR clusters are transcribed and processed into CRISPR RNA (crRNA). The type III-A Csm effector complex binds crRNA and acts as a crRNA-guided RNase, DNase and cyclic oligoadenylate synthase; binding of target RNA cognate to the crRNA is required for all activities. In a heterologous host this Csm effector complex restricts ssRNA phage MS2, suggesting it may target RNA viruses in vivo. Its function is as follows. Csm functions as a non-specific ssDNase. Base-pairing between crRNA and target RNA to form a ternary Csm complex activates a ssDNase activity; target RNA cleavage suppresses the ssDNase, a temporal control that prevents uncontrolled DNA degradation. Viral RNA transcripts probably tether the Csm complex to the viral genome, recruiting Cas10 ssDNA activity which is able to degrade DNA in the transcription bubble, spatially controlling the DNase activity. The subunit probably binds to the 5' handle of the crRNA, helping in discrimination between self- and non-self. In Streptococcus thermophilus, this protein is CRISPR system Cms protein Csm4.